Reading from the N-terminus, the 371-residue chain is Cytochrome b (371 aa).

Helical transmembrane passes span 25-45 (FGSMLLTCLMLQVLTGFFLAI), 69-90 (WIMQNTHAIGASLFFICIYIHI), 105-125 (WLSGVTLLMTLMATAFFGYVL), and 170-190 (FCALHFILPFIIISLSSIHII). His75 and His89 together coordinate heme b. The heme b site is built by His174 and His188. His193 serves as a coordination point for a ubiquinone. The next 4 helical transmembrane spans lie at 218 to 238 (YKDFMTTTSMIILLPISLSVS), 280 to 300 (LGGTLALLMSILILTLPPFTH), 312 to 332 (LSQTLFWTLIATFVMITWTAT), and 339 to 358 (FITISQLTSIFYFSFFIMNP).

Belongs to the cytochrome b family. As to quaternary structure, the cytochrome bc1 complex contains 3 respiratory subunits (MT-CYB, CYC1 and UQCRFS1), 2 core proteins (UQCRC1 and UQCRC2) and probably 6 low-molecular weight proteins. The cofactor is heme b.

The protein resides in the mitochondrion inner membrane. Functionally, component of the ubiquinol-cytochrome c reductase complex (complex III or cytochrome b-c1 complex) that is part of the mitochondrial respiratory chain. The b-c1 complex mediates electron transfer from ubiquinol to cytochrome c. Contributes to the generation of a proton gradient across the mitochondrial membrane that is then used for ATP synthesis. In Micrurus tener microgalbineus (Spotted coral snake), this protein is Cytochrome b (MT-CYB).